The following is a 2995-amino-acid chain: Striated muscle preferentially expressed protein kinase (2995 aa).

The region spanning 27–109 (PPVFLRKLKW…GEARTSAVLA (83 aa)) is the Ig-like 1 domain. C50 and C93 form a disulfide bridge. Disordered regions lie at residues 250 to 272 (ITGSHQSGGLQDPSSIQTPKVSQ) and 384 to 467 (LTQT…NSKP). Over residues 384–404 (LTQTDKQSSVSTESVPTQVIQ) the composition is skewed to polar residues. The segment covering 454-464 (PPEMNENQENN) has biased composition (low complexity). Ig-like domains follow at residues 613–701 (PAES…EELI) and 714–802 (PLFT…AELY). An intrachain disulfide couples C639 to C691. The disordered stretch occupies residues 815–834 (SRLEKMPSIPEEPEVPEGEV). Residues 840-930 (PDFIKPLSDL…AACYAHLYVA (91 aa)) enclose the Ig-like 4 domain. Cysteines 861 and 912 form a disulfide. The Fibronectin type-III 1 domain maps to 937–1035 (PDGPPVIESV…TDLVQLVDRG (99 aa)). An Ig-like 5 domain is found at 1135-1224 (PPIFETIMED…GSVSCKAELT (90 aa)). Residues 1255-1505 (YDIHKEIGRG…ATECLLHPWF (251 aa)) enclose the Protein kinase 1 domain. ATP-binding positions include 1261–1269 (IGRGAFSYV) and K1283. D1372 serves as the catalytic Proton acceptor. Disordered regions lie at residues 1559-1582 (VPRNLKDGSPPPSSSSDSDEDIDE), 1776-1839 (RNFR…STGD), 2017-2058 (LKRL…TGLK), 2163-2189 (VHSRSKDRKDKETKPHIDAEAPNVEKQ), 2211-2254 (SGIS…KMDI), and 2268-2322 (SKET…KEDF). Residues 1786–1795 (SGDSGTFNND) show a composition bias toward polar residues. Over residues 2274-2284 (SSSSAHSIESS) the composition is skewed to low complexity. Residues 2289-2299 (TEIRSRWDRWG) show a composition bias toward basic and acidic residues. The 91-residue stretch at 2323 to 2413 (PPVFHIALKD…ASVTTSCILT (91 aa)) folds into the Ig-like 6 domain. A disulfide bond links C2345 and C2397. The Fibronectin type-III 2 domain maps to 2420-2513 (CPGTPEIRQI…DGVSIDTKVT (94 aa)). 2 disordered regions span residues 2574 to 2609 (PKMSTPLDLPKPASSVNTMPPITQTQTVSPRSYTAP) and 2648 to 2676 (GEGASSPTPETPTGQAVSSTKSETTLRQG). Composition is skewed to polar residues over residues 2587 to 2605 (SSVNTMPPITQTQTVSPRS) and 2652 to 2674 (SSPTPETPTGQAVSSTKSETTLR). Positions 2682–2934 (YSFLDEKARG…IKDCLNHSWL (253 aa)) constitute a Protein kinase 2 domain. ATP is bound by residues 2688–2696 (KARGRFGVI) and K2711. D2801 functions as the Proton acceptor in the catalytic mechanism.

It belongs to the protein kinase superfamily. CAMK Ser/Thr protein kinase family. In terms of processing, may be autophosphorylated. Preferentially expressed in striated muscle.

The protein resides in the nucleus. The catalysed reaction is L-seryl-[protein] + ATP = O-phospho-L-seryl-[protein] + ADP + H(+). It catalyses the reaction L-threonyl-[protein] + ATP = O-phospho-L-threonyl-[protein] + ADP + H(+). The protein is Striated muscle preferentially expressed protein kinase (speg) of Danio rerio (Zebrafish).